Here is a 544-residue protein sequence, read N- to C-terminus: Probable protein kinase UbiB (544 aa).

The 379-residue stretch at 123-501 folds into the Protein kinase domain; sequence DFDIEPLASA…KRQQATGKFL (379 aa). ATP is bound by residues 129–137 and lysine 152; that span reads LASASIAQV. The Proton acceptor role is filled by aspartate 287. The chain crosses the membrane as a helical span at residues 500-520; that stretch reads FLFGVGATLVVCSAILVSSPY.

Belongs to the ABC1 family. UbiB subfamily.

Its subcellular location is the cell inner membrane. It participates in cofactor biosynthesis; ubiquinone biosynthesis [regulation]. Its function is as follows. Is probably a protein kinase regulator of UbiI activity which is involved in aerobic coenzyme Q (ubiquinone) biosynthesis. The sequence is that of Probable protein kinase UbiB from Vibrio atlanticus (strain LGP32) (Vibrio splendidus (strain Mel32)).